The following is a 211-amino-acid chain: Urease accessory protein UreF (211 aa).

Residues 71 to 93 (DDADRETDARTPAPAARHASRSQ) form a disordered region.

Belongs to the UreF family. In terms of assembly, ureD, UreF and UreG form a complex that acts as a GTP-hydrolysis-dependent molecular chaperone, activating the urease apoprotein by helping to assemble the nickel containing metallocenter of UreC. The UreE protein probably delivers the nickel.

The protein resides in the cytoplasm. Its function is as follows. Required for maturation of urease via the functional incorporation of the urease nickel metallocenter. The sequence is that of Urease accessory protein UreF from Mycobacterium tuberculosis (strain ATCC 25177 / H37Ra).